Consider the following 269-residue polypeptide: Zinc import ATP-binding protein ZnuC (269 aa).

The ABC transporter domain occupies 6 to 221; that stretch reads VRLTQVGVSF…PAFVELFGQD (216 aa). Residue 38–45 participates in ATP binding; sequence GPNGAGKT.

This sequence belongs to the ABC transporter superfamily. Zinc importer (TC 3.A.1.15.5) family. The complex is composed of two ATP-binding proteins (ZnuC), two transmembrane proteins (ZnuB) and a solute-binding protein (ZnuA).

The protein resides in the cell inner membrane. It catalyses the reaction Zn(2+)(out) + ATP(in) + H2O(in) = Zn(2+)(in) + ADP(in) + phosphate(in) + H(+)(in). Part of the ABC transporter complex ZnuABC involved in zinc import. Responsible for energy coupling to the transport system. The polypeptide is Zinc import ATP-binding protein ZnuC (Pseudomonas aeruginosa (strain UCBPP-PA14)).